Consider the following 941-residue polypeptide: Replicative DNA helicase DnaB (941 aa).

Residues 1–25 (MAEFEERPRLSIGEEEAPPYPLEKL) are disordered. The region spanning 214-484 (RPGGITGVPS…PVYRLTTRLG (271 aa)) is the SF4 helicase; first part domain. 245 to 252 (ARPSMGKT) contacts ATP. The DOD-type homing endonuclease domain occupies 534–683 (LLGHLIGDGC…VQSLLLRLGI (150 aa)). One can recognise an SF4 helicase; second part domain in the interval 646–915 (DGCIQMRRGK…ARFENLTMYQ (270 aa)). Residues 914-941 (YQPEPGTPLPETPDETILPSGPPDEAPF) are disordered.

This sequence belongs to the helicase family. DnaB subfamily. In terms of assembly, homohexamer. In terms of processing, upon expression in E.coli this protein undergoes self splicing that involves a post-translational excision of the intervening region (intein) followed by peptide ligation.

It carries out the reaction Couples ATP hydrolysis with the unwinding of duplex DNA at the replication fork by translocating in the 5'-3' direction. This creates two antiparallel DNA single strands (ssDNA). The leading ssDNA polymer is the template for DNA polymerase III holoenzyme which synthesizes a continuous strand.. The catalysed reaction is ATP + H2O = ADP + phosphate + H(+). Functionally, the main replicative DNA helicase, it participates in initiation and elongation during chromosome replication. Travels ahead of the DNA replisome, separating dsDNA into templates for DNA synthesis. A processive ATP-dependent 5'-3' DNA helicase it has DNA-dependent ATPase activity. The intein is an endonuclease. The chain is Replicative DNA helicase DnaB from Rhodothermus marinus (Rhodothermus obamensis).